Consider the following 628-residue polypeptide: MDEKTPSVTNPVENEDLALLTQASRNAINRLVRCLFAERLLAPNALLWAREGRQAWFPLWPSQRMLHFTDLSLAPAGTLRNRGQIEVLDGTGARQRIDDPAALMREVASSLAITPASDGLEHLLRDVDNSMRNDMLARRERGRWSARLRQEIAEAGAPGFLAYLERSLPTHLAAMTLDQWGALEGHPFYPTWKAKPGLAAEEVAALSPEFGARVPLRIAALRSSWAYVEKMPHVGSYSEWFAENFPDLSRDWAEGLKARGQSPEDWLPLPVHAWHLEHFVRREFAAEIEAGIFDPDGPEIVTLPSMSFRTMLPTTEAPRPFIKLPVAIWMTSEQRTLQAKSIHMGPRLSTLISDIVSEEDDLRCRLEILTEELGAILRHPETGDEHLGRFLSVVYRKADALARRDGLLPVTVAALLTAGPVDGRPLICELIGKSGDESEAAIAAFFRLYARTVVRPTLAMYLLYGIAFEAHQQNSTILFDDRGLPRKLLIRDFGDGRSFAPLFTERGYELQPFSRGGILPTTFDDDISLVRSFLINACFVCHLHEIALCLTEQYSVAGDSLWRVLREETEEAFETLRPRMLSDAFWLEERQAFLERPWPARSVLRMHLERYRDYRIEHQLPNPLASAE.

It belongs to the IucA/IucC family.

This is an uncharacterized protein from Sinorhizobium fredii (strain NBRC 101917 / NGR234).